The primary structure comprises 145 residues: Putative pre-16S rRNA nuclease (145 aa).

This sequence belongs to the YqgF nuclease family.

The protein resides in the cytoplasm. Its function is as follows. Could be a nuclease involved in processing of the 5'-end of pre-16S rRNA. This is Putative pre-16S rRNA nuclease from Pseudomonas fluorescens (strain SBW25).